Here is a 1040-residue protein sequence, read N- to C-terminus: DNA mismatch repair protein MutS (1040 aa).

The span at 1-10 shows a compositional bias: polar residues; the sequence is MPVKPSAQNN. Disordered stretches follow at residues 1–22 and 130–157; these read MPVK…SVPV and ATGT…SKST. The span at 11–22 shows a compositional bias: low complexity; it reads SPSKPTSKSVPV. The segment covering 130 to 143 has biased composition (polar residues); the sequence is ATGTDNANNPSNAP. 759-766 provides a ligand contact to ATP; the sequence is GPNMGGKS.

The protein belongs to the DNA mismatch repair MutS family.

Its function is as follows. This protein is involved in the repair of mismatches in DNA. It is possible that it carries out the mismatch recognition step. This protein has a weak ATPase activity. This chain is DNA mismatch repair protein MutS, found in Psychrobacter cryohalolentis (strain ATCC BAA-1226 / DSM 17306 / VKM B-2378 / K5).